A 199-amino-acid chain; its full sequence is METFPLLLLSLGLVLAEASESTMKIIKEEFTDEEMQYDMAKSGQEKQTIEILMNPILLVKNTSLSMSKDDMSSTLLTFRSLHYNDPKGNSSGNDKECCNDMTVWRKVSEANGSCKWSNNFIRSSTEVMRRVHRAPSCKFVQNPGISCCESLELENTVCQFTTGKQFPRCQYHSVTSLEKILTVLTGHSLMSWLVCGSKL.

A signal peptide spans 1–16 (METFPLLLLSLGLVLA). An N-linked (GlcNAc...) asparagine glycan is attached at Asn61. Residue His82 is the Proton acceptor of the active site. 2 N-linked (GlcNAc...) asparagine glycosylation sites follow: Asn89 and Asn111. Cystine bridges form between Cys98–Cys158 and Cys114–Cys169. Substrate is bound at residue 115–119 (KWSNN).

The protein belongs to the pancreatic ribonuclease family.

Its subcellular location is the secreted. This Homo sapiens (Human) protein is Putative inactive ribonuclease 11 (RNASE11).